The chain runs to 510 residues: Guanosine import ATP-binding protein NupO (510 aa).

ABC transporter domains lie at 5–240 (IEML…VGRE) and 257–501 (LAID…AGST). 37–44 (GENGAGKS) lines the ATP pocket.

This sequence belongs to the ABC transporter superfamily. In terms of assembly, the complex is composed of two ATP-binding proteins (NupO), two transmembrane proteins (NupP and NupQ) and a solute-binding protein (NupN).

The protein resides in the cell membrane. Functionally, part of an ABC transporter complex involved in the uptake of guanosine. Responsible for energy coupling to the transport system. May be a nucleoside transporter of broad specificity but with various affinities for different substrates. The polypeptide is Guanosine import ATP-binding protein NupO (Bacillus subtilis (strain 168)).